A 487-amino-acid chain; its full sequence is MINASVSELRRALDTRQVSSVELATLFLDRIAERNPALNAFITIDREGALAAARAADARIAAGTAGPLTGIPLAHKDLFCTEGVLTTCGSKMLADFVSPYDAHVVSRLKDAGAVSLGKTNMDEFAMGSSNESSHYGAVRNPWDTTRIPGGSSGGSAAAVAARLVPLATGSDTGGSVRQPASHTGVTGIKPTYGVVSRYGMIAYASSLDQGGAFGASAEDCALLLTAMAGFDPRDSTCLDRPAEDYAAALAPTAGGKPLAGLRIGLPREFFAEGMADDVRAAVDAALDQYRALGAVTVEVSLPNAKLAVPAYYVIAPAEASSNLSRFDGVRYGHRAAEYGDLNDMYCKSRAEGFGAEVKRRILVGTYVLSHGYYDAYYLQAQKLRRLIAQDFQAAFAQCDVIAGPTSPTTAWAIGEKADDPVQMYLSDIYTIAVNLAGLPGLSHPCGFGAGRLPVGLQLIGNYFGESRLLATAHQYQQASDWHLQRPE.

Active-site charge relay system residues include Lys-76 and Ser-151. The Acyl-ester intermediate role is filled by Ser-175.

This sequence belongs to the amidase family. GatA subfamily. As to quaternary structure, heterotrimer of A, B and C subunits.

It carries out the reaction L-glutamyl-tRNA(Gln) + L-glutamine + ATP + H2O = L-glutaminyl-tRNA(Gln) + L-glutamate + ADP + phosphate + H(+). Its function is as follows. Allows the formation of correctly charged Gln-tRNA(Gln) through the transamidation of misacylated Glu-tRNA(Gln) in organisms which lack glutaminyl-tRNA synthetase. The reaction takes place in the presence of glutamine and ATP through an activated gamma-phospho-Glu-tRNA(Gln). The protein is Glutamyl-tRNA(Gln) amidotransferase subunit A of Azoarcus sp. (strain BH72).